Consider the following 245-residue polypeptide: Eukaryotic translation initiation factor 3 subunit K (245 aa).

In terms of domain architecture, PCI spans Y46–N227.

The protein belongs to the eIF-3 subunit K family. As to quaternary structure, component of the eukaryotic translation initiation factor 3 (eIF-3) complex.

It localises to the cytoplasm. Component of the eukaryotic translation initiation factor 3 (eIF-3) complex, which is involved in protein synthesis of a specialized repertoire of mRNAs and, together with other initiation factors, stimulates binding of mRNA and methionyl-tRNAi to the 40S ribosome. The eIF-3 complex specifically targets and initiates translation of a subset of mRNAs involved in cell proliferation. The protein is Eukaryotic translation initiation factor 3 subunit K of Phaeosphaeria nodorum (strain SN15 / ATCC MYA-4574 / FGSC 10173) (Glume blotch fungus).